We begin with the raw amino-acid sequence, 207 residues long: Ribonuclease HII (207 aa).

The region spanning 20–207 (QLFAGVDEVG…KPVKRVLGIE (188 aa)) is the RNase H type-2 domain. Asp26, Glu27, and Asp118 together coordinate a divalent metal cation.

It belongs to the RNase HII family. Mn(2+) is required as a cofactor. It depends on Mg(2+) as a cofactor.

The protein localises to the cytoplasm. It carries out the reaction Endonucleolytic cleavage to 5'-phosphomonoester.. Functionally, endonuclease that specifically degrades the RNA of RNA-DNA hybrids. The polypeptide is Ribonuclease HII (Aliivibrio fischeri (strain MJ11) (Vibrio fischeri)).